A 263-amino-acid chain; its full sequence is Phosphate import ATP-binding protein PstB (263 aa).

The region spanning 16–258 is the ABC transporter domain; that stretch reads VTARNVTVSY…PRDTRTQDYI (243 aa). Position 48–55 (48–55) interacts with ATP; sequence GPSGCGKS.

It belongs to the ABC transporter superfamily. Phosphate importer (TC 3.A.1.7) family. As to quaternary structure, the complex is composed of two ATP-binding proteins (PstB), two transmembrane proteins (PstC and PstA) and a solute-binding protein (PstS).

It is found in the cell inner membrane. The catalysed reaction is phosphate(out) + ATP + H2O = ADP + 2 phosphate(in) + H(+). In terms of biological role, part of the ABC transporter complex PstSACB involved in phosphate import. Responsible for energy coupling to the transport system. This chain is Phosphate import ATP-binding protein PstB, found in Maricaulis maris (strain MCS10) (Caulobacter maris).